Reading from the N-terminus, the 502-residue chain is Cardiolipin synthase (502 aa).

3 helical membrane-spanning segments follow: residues 7–27 (VAIL…FWEG), 29–49 (LLGL…LVIS), and 59–79 (IAWL…YLLF). 2 PLD phosphodiesterase domains span residues 237–264 (INFR…GDEY) and 415–442 (EKGF…DMRS). Active-site residues include His-242, Lys-244, Asp-249, His-420, Lys-422, and Asp-427.

Belongs to the phospholipase D family. Cardiolipin synthase subfamily.

It is found in the cell membrane. The enzyme catalyses 2 a 1,2-diacyl-sn-glycero-3-phospho-(1'-sn-glycerol) = a cardiolipin + glycerol. Catalyzes the reversible phosphatidyl group transfer from one phosphatidylglycerol molecule to another to form cardiolipin (CL) (diphosphatidylglycerol) and glycerol. The sequence is that of Cardiolipin synthase (cls) from Geobacillus kaustophilus (strain HTA426).